Reading from the N-terminus, the 169-residue chain is Ecotin (169 aa).

An N-terminal signal peptide occupies residues 1 to 21; it reads MKKCSIILASVLLATSINAIA. An intrachain disulfide couples C76 to C113.

It belongs to the protease inhibitor I11 (ecotin) family. Homodimer.

The protein localises to the periplasm. Functionally, general inhibitor of pancreatic serine proteases: inhibits chymotrypsin, trypsin, elastases, factor X, kallikrein as well as a variety of other proteases. The chain is Ecotin from Yersinia pseudotuberculosis serotype O:1b (strain IP 31758).